Here is a 344-residue protein sequence, read N- to C-terminus: Uroporphyrinogen decarboxylase (344 aa).

Substrate-binding positions include 23–27 (RQAGR), Asp73, Tyr149, Thr204, and His321.

This sequence belongs to the uroporphyrinogen decarboxylase family. In terms of assembly, homodimer.

Its subcellular location is the cytoplasm. It carries out the reaction uroporphyrinogen III + 4 H(+) = coproporphyrinogen III + 4 CO2. Its pathway is porphyrin-containing compound metabolism; protoporphyrin-IX biosynthesis; coproporphyrinogen-III from 5-aminolevulinate: step 4/4. In terms of biological role, catalyzes the decarboxylation of four acetate groups of uroporphyrinogen-III to yield coproporphyrinogen-III. This chain is Uroporphyrinogen decarboxylase, found in Francisella tularensis subsp. holarctica (strain LVS).